Reading from the N-terminus, the 262-residue chain is Short-chain Z-isoprenyl diphosphate synthase (262 aa).

Aspartate 40 is a catalytic residue. Aspartate 40 provides a ligand contact to Mg(2+). Substrate is bound by residues 41-44 (GNRR), tryptophan 45, and 86-88 (STE). Asparagine 89 (proton acceptor) is an active-site residue. Substrate-binding positions include arginine 92, arginine 211, and 217-219 (RLS). Glutamate 230 serves as a coordination point for Mg(2+).

This sequence belongs to the UPP synthase family. Z-FPP synthase subfamily. Mg(2+) is required as a cofactor.

It carries out the reaction isopentenyl diphosphate + (2E)-geranyl diphosphate = (2Z,6E)-farnesyl diphosphate + diphosphate. The protein operates within phospholipid metabolism; decaprenyl phosphate biosynthesis. Functionally, generates Z-farnesyl diphosphate (Z-FPP) from isopentenyl pyrophosphate (IPP). Z-FPP is the precursor of decaprenyl diphosphate, which has a central role in the biosynthesis of the mycobacterial cell wall. The polypeptide is Short-chain Z-isoprenyl diphosphate synthase (Mycobacterium leprae (strain TN)).